A 791-amino-acid polypeptide reads, in one-letter code: Ribosome biogenesis protein ERB1 (791 aa).

Polar residues predominate over residues 1–12 (MARKNSSLNGSE). Disordered regions lie at residues 1–60 (MARK…DDSD) and 68–87 (AEEE…SEEG). Composition is skewed to acidic residues over residues 25-60 (ESEL…DDSD) and 69-87 (EEEN…SEEG). The tract at residues 254 to 372 (RFVPSKHEAK…LRKVPGYSES (119 aa)) is required for interaction with NOP7. The interval 372–408 (SVRERFERSLDLYLAPRVRKNKLNIDPESLIPELPST) is required for interaction with YTM1. 7 WD repeats span residues 424 to 463 (GHKG…EVYQ), 472 to 512 (NNDD…FEIE), 576 to 618 (TCRK…TQSP), 621 to 659 (KSKG…LIKK), 662 to 701 (PGAR…TPYK), 705 to 744 (YHEK…DLMK), and 760 to 791 (VNSL…LWTT).

This sequence belongs to the WD repeat BOP1/ERB1 family. Component of the NOP7 complex, composed of ERB1, NOP7 and YTM1. The complex is held together by ERB1, which interacts with NOP7 via its N-terminal domain and with YTM1 via a high-affinity interaction between the seven-bladed beta-propeller domains of the 2 proteins. The NOP7 complex associates with the 66S pre-ribosome.

Its subcellular location is the nucleus. It is found in the nucleolus. The protein resides in the nucleoplasm. In terms of biological role, component of the NOP7 complex, which is required for maturation of the 25S and 5.8S ribosomal RNAs and formation of the 60S ribosome. The sequence is that of Ribosome biogenesis protein ERB1 from Kluyveromyces lactis (strain ATCC 8585 / CBS 2359 / DSM 70799 / NBRC 1267 / NRRL Y-1140 / WM37) (Yeast).